The following is a 179-amino-acid chain: Natural killer cells antigen CD94 (179 aa).

The Cytoplasmic portion of the chain corresponds to 1-10 (MAVFKTTLWR). A helical; Signal-anchor for type II membrane protein transmembrane segment spans residues 11–31 (LISGTLGIICLSLMSTLGILL). At 32-179 (KNSFTKLSIE…NRYICKQQLI (148 aa)) the chain is on the extracellular side. 2 disulfide bridges follow: C58/C70 and C61/C72. Residues 68–175 (YRCNCYFISS…CEDKNRYICK (108 aa)) enclose the C-type lectin domain. 2 N-linked (GlcNAc...) asparagine glycosylation sites follow: N83 and N132. Disulfide bonds link C89-C174 and C152-C166.

Can form disulfide-bonded heterodimer with NKG2 family members KLRC1 and KLRC2. KLRD1-KLRC1 heterodimer interacts with peptide-bound HLA-E-B2M heterotrimeric complex. KLRD1 plays a prominent role in directly interacting with HLA-E. KLRD1-KLRC1 interacts with much higher affinity with peptide-bound HLA-E-B2M than KLRD1-KLRC2. Interacts with the adapter protein TYROBP/DAP12; this interaction is required for cell surface expression and cell activation. In terms of tissue distribution, expressed in NK cell subsets (at protein level). Expressed in memory/effector CD8-positive alpha-beta T cell subsets (at protein level). Expressed in melanoma-specific cytotoxic T cell clones (at protein level). Expressed in terminally differentiated cytotoxic gamma-delta T cells (at protein level). KLRD1-KLRC1 and KLRD1-KLRC2 are differentially expressed in NK and T cell populations, with only minor subsets expressing both receptor complexes (at protein level).

It localises to the cell membrane. Its function is as follows. Immune receptor involved in self-nonself discrimination. In complex with KLRC1 or KLRC2 on cytotoxic and regulatory lymphocyte subsets, recognizes non-classical major histocompatibility (MHC) class Ib molecule HLA-E loaded with self-peptides derived from the signal sequence of classical MHC class Ia and non-classical MHC class Ib molecules. Enables cytotoxic cells to monitor the expression of MHC class I molecules in healthy cells and to tolerate self. Primarily functions as a ligand binding subunit as it lacks the capacity to signal. In terms of biological role, KLRD1-KLRC1 acts as an immune inhibitory receptor. Key inhibitory receptor on natural killer (NK) cells that regulates their activation and effector functions. Dominantly counteracts T cell receptor signaling on a subset of memory/effector CD8-positive T cells as part of an antigen-driven response to avoid autoimmunity. On intraepithelial CD8-positive gamma-delta regulatory T cells triggers TGFB1 secretion, which in turn limits the cytotoxic programming of intraepithelial CD8-positive alpha-beta T cells, distinguishing harmless from pathogenic antigens. In HLA-E-rich tumor microenvironment, acts as an immune inhibitory checkpoint and may contribute to progressive loss of effector functions of NK cells and tumor-specific T cells, a state known as cell exhaustion. Upon HLA-E-peptide binding, transmits intracellular signals through KLRC1 immunoreceptor tyrosine-based inhibition motifs (ITIMs) by recruiting INPP5D/SHIP-1 and INPPL1/SHIP-2 tyrosine phosphatases to ITIMs, and ultimately opposing signals transmitted by activating receptors through dephosphorylation of proximal signaling molecules. KLRD1-KLRC2 acts as an immune activating receptor. On cytotoxic lymphocyte subsets recognizes HLA-E loaded with signal sequence-derived peptides from non-classical MHC class Ib HLA-G molecules, likely playing a role in the generation and effector functions of adaptive NK cells and in maternal-fetal tolerance during pregnancy. Regulates the effector functions of terminally differentiated cytotoxic lymphocyte subsets, and in particular may play a role in adaptive NK cell response to viral infection. Upon HLA-E-peptide binding, transmits intracellular signals via the adapter protein TYROBP/DAP12, triggering the phosphorylation of proximal signaling molecules and cell activation. Functionally, (Microbial infection) Viruses like human cytomegalovirus have evolved an escape mechanism whereby virus-induced down-regulation of host MHC class I molecules is coupled to the binding of viral peptides to HLA-E, restoring HLA-E expression and inducing HLA-E-dependent NK cell immune tolerance to infected cells. Recognizes HLA-E in complex with human cytomegalovirus UL40-derived peptide (VMAPRTLIL) and inhibits NK cell cytotoxicity. Its function is as follows. (Microbial infection) May recognize HLA-E in complex with HIV-1 gag/Capsid protein p24-derived peptide (AISPRTLNA) on infected cells and may inhibit NK cell cytotoxicity, a mechanism that allows HIV-1 to escape immune recognition. In terms of biological role, (Microbial infection) Upon SARS-CoV-2 infection, may contribute to functional exhaustion of cytotoxic NK cells and CD8-positive T cells. On NK cells, may recognize HLA-E in complex with SARS-CoV-2 S/Spike protein S1-derived peptide (LQPRTFLL) expressed on the surface of lung epithelial cells, inducing NK cell exhaustion and dampening antiviral immune surveillance. The chain is Natural killer cells antigen CD94 (KLRD1) from Homo sapiens (Human).